The following is a 24-amino-acid chain: Cytochrome c oxidase subunit 7A2, mitochondrial (24 aa).

A compositionally biased stretch (basic and acidic residues) spans 1-13 (FENKVPEKQKLFQ). The tract at residues 1-24 (FENKVPEKQKLFQEDNGIPVHLKG) is disordered. At K10 the chain carries N6-acetyllysine.

The protein belongs to the cytochrome c oxidase VIIa family. As to quaternary structure, component of the cytochrome c oxidase (complex IV, CIV), a multisubunit enzyme composed of 14 subunits. The complex is composed of a catalytic core of 3 subunits MT-CO1, MT-CO2 and MT-CO3, encoded in the mitochondrial DNA, and 11 supernumerary subunits COX4I, COX5A, COX5B, COX6A, COX6B, COX6C, COX7A, COX7B, COX7C, COX8 and NDUFA4, which are encoded in the nuclear genome. The complex exists as a monomer or a dimer and forms supercomplexes (SCs) in the inner mitochondrial membrane with NADH-ubiquinone oxidoreductase (complex I, CI) and ubiquinol-cytochrome c oxidoreductase (cytochrome b-c1 complex, complex III, CIII), resulting in different assemblies (supercomplex SCI(1)III(2)IV(1) and megacomplex MCI(2)III(2)IV(2)). Interacts with PET100.

It localises to the mitochondrion inner membrane. It functions in the pathway energy metabolism; oxidative phosphorylation. In terms of biological role, component of the cytochrome c oxidase, the last enzyme in the mitochondrial electron transport chain which drives oxidative phosphorylation. The respiratory chain contains 3 multisubunit complexes succinate dehydrogenase (complex II, CII), ubiquinol-cytochrome c oxidoreductase (cytochrome b-c1 complex, complex III, CIII) and cytochrome c oxidase (complex IV, CIV), that cooperate to transfer electrons derived from NADH and succinate to molecular oxygen, creating an electrochemical gradient over the inner membrane that drives transmembrane transport and the ATP synthase. Cytochrome c oxidase is the component of the respiratory chain that catalyzes the reduction of oxygen to water. Electrons originating from reduced cytochrome c in the intermembrane space (IMS) are transferred via the dinuclear copper A center (CU(A)) of subunit 2 and heme A of subunit 1 to the active site in subunit 1, a binuclear center (BNC) formed by heme A3 and copper B (CU(B)). The BNC reduces molecular oxygen to 2 water molecules using 4 electrons from cytochrome c in the IMS and 4 protons from the mitochondrial matrix. The chain is Cytochrome c oxidase subunit 7A2, mitochondrial (COX7A2) from Ovis aries (Sheep).